A 390-amino-acid chain; its full sequence is GTPase Obg (390 aa).

Residues 1-159 (MKFVDEAVIR…RHLRLELLLL (159 aa)) form the Obg domain. The interval 22 to 42 (SFRTEKYVPRGGPDGGDGGDG) is disordered. Positions 33–42 (GPDGGDGGDG) are enriched in gly residues. The 174-residue stretch at 160–333 (ADVGMLGLPN…LTYNLMTTIE (174 aa)) folds into the OBG-type G domain. GTP is bound by residues 166 to 173 (GLPNAGKS), 191 to 195 (FTTLI), 213 to 216 (DIPG), 283 to 286 (NKVD), and 314 to 316 (SAL). Mg(2+) contacts are provided by Ser-173 and Thr-193.

It belongs to the TRAFAC class OBG-HflX-like GTPase superfamily. OBG GTPase family. In terms of assembly, monomer. Mg(2+) is required as a cofactor.

The protein localises to the cytoplasm. Its function is as follows. An essential GTPase which binds GTP, GDP and possibly (p)ppGpp with moderate affinity, with high nucleotide exchange rates and a fairly low GTP hydrolysis rate. Plays a role in control of the cell cycle, stress response, ribosome biogenesis and in those bacteria that undergo differentiation, in morphogenesis control. This is GTPase Obg from Photobacterium profundum (strain SS9).